A 96-amino-acid polypeptide reads, in one-letter code: uncharacterized protein (96 aa).

A helical transmembrane segment spans residues 13–35 (PVVRYVVALLHWLLWRVVVIIAI).

It localises to the membrane. This is an uncharacterized protein from Archaeoglobus fulgidus (strain ATCC 49558 / DSM 4304 / JCM 9628 / NBRC 100126 / VC-16).